Here is a 356-residue protein sequence, read N- to C-terminus: Histidinol-phosphate aminotransferase (356 aa).

At Lys214 the chain carries N6-(pyridoxal phosphate)lysine.

It belongs to the class-II pyridoxal-phosphate-dependent aminotransferase family. Histidinol-phosphate aminotransferase subfamily. In terms of assembly, homodimer. Pyridoxal 5'-phosphate is required as a cofactor.

The enzyme catalyses L-histidinol phosphate + 2-oxoglutarate = 3-(imidazol-4-yl)-2-oxopropyl phosphate + L-glutamate. Its pathway is amino-acid biosynthesis; L-histidine biosynthesis; L-histidine from 5-phospho-alpha-D-ribose 1-diphosphate: step 7/9. The polypeptide is Histidinol-phosphate aminotransferase (Escherichia coli O1:K1 / APEC).